A 459-amino-acid polypeptide reads, in one-letter code: UDP-N-acetylglucosamine 1-carboxyvinyltransferase (459 aa).

40–41 (KN) contacts phosphoenolpyruvate. UDP-N-acetyl-alpha-D-glucosamine is bound at residue arginine 111. Residue cysteine 135 is the Proton donor of the active site. Cysteine 135 is modified (2-(S-cysteinyl)pyruvic acid O-phosphothioketal). Residues 140–144 (RPVDL), aspartate 324, and valine 346 contribute to the UDP-N-acetyl-alpha-D-glucosamine site. A disordered region spans residues 437–459 (PSAPPSEVSSAVAAGPDAAAAPV). The segment covering 441–459 (PSEVSSAVAAGPDAAAAPV) has biased composition (low complexity).

Belongs to the EPSP synthase family. MurA subfamily.

It localises to the cytoplasm. The enzyme catalyses phosphoenolpyruvate + UDP-N-acetyl-alpha-D-glucosamine = UDP-N-acetyl-3-O-(1-carboxyvinyl)-alpha-D-glucosamine + phosphate. It participates in cell wall biogenesis; peptidoglycan biosynthesis. Cell wall formation. Adds enolpyruvyl to UDP-N-acetylglucosamine. The sequence is that of UDP-N-acetylglucosamine 1-carboxyvinyltransferase from Gloeobacter violaceus (strain ATCC 29082 / PCC 7421).